The chain runs to 118 residues: Ribosome-binding factor A (118 aa).

This sequence belongs to the RbfA family. In terms of assembly, monomer. Binds 30S ribosomal subunits, but not 50S ribosomal subunits or 70S ribosomes.

It is found in the cytoplasm. Its function is as follows. One of several proteins that assist in the late maturation steps of the functional core of the 30S ribosomal subunit. Associates with free 30S ribosomal subunits (but not with 30S subunits that are part of 70S ribosomes or polysomes). Required for efficient processing of 16S rRNA. May interact with the 5'-terminal helix region of 16S rRNA. In Shouchella clausii (strain KSM-K16) (Alkalihalobacillus clausii), this protein is Ribosome-binding factor A.